Here is a 471-residue protein sequence, read N- to C-terminus: Glutamate--tRNA ligase (471 aa).

Residues 9–19 carry the 'HIGH' region motif; it reads PSPTGYLHVGG. Zn(2+)-binding residues include C98, C100, C125, and H127. The 'KMSKS' region motif lies at 237-241; that stretch reads KLSKR. Residue K240 coordinates ATP.

The protein belongs to the class-I aminoacyl-tRNA synthetase family. Glutamate--tRNA ligase type 1 subfamily. Monomer. Zn(2+) is required as a cofactor.

It is found in the cytoplasm. The enzyme catalyses tRNA(Glu) + L-glutamate + ATP = L-glutamyl-tRNA(Glu) + AMP + diphosphate. In terms of biological role, catalyzes the attachment of glutamate to tRNA(Glu) in a two-step reaction: glutamate is first activated by ATP to form Glu-AMP and then transferred to the acceptor end of tRNA(Glu). The protein is Glutamate--tRNA ligase of Escherichia coli O6:K15:H31 (strain 536 / UPEC).